A 239-amino-acid chain; its full sequence is 2-C-methyl-D-erythritol 4-phosphate cytidylyltransferase (239 aa).

Belongs to the IspD/TarI cytidylyltransferase family. IspD subfamily.

It carries out the reaction 2-C-methyl-D-erythritol 4-phosphate + CTP + H(+) = 4-CDP-2-C-methyl-D-erythritol + diphosphate. It functions in the pathway isoprenoid biosynthesis; isopentenyl diphosphate biosynthesis via DXP pathway; isopentenyl diphosphate from 1-deoxy-D-xylulose 5-phosphate: step 2/6. Catalyzes the formation of 4-diphosphocytidyl-2-C-methyl-D-erythritol from CTP and 2-C-methyl-D-erythritol 4-phosphate (MEP). In Acidobacterium capsulatum (strain ATCC 51196 / DSM 11244 / BCRC 80197 / JCM 7670 / NBRC 15755 / NCIMB 13165 / 161), this protein is 2-C-methyl-D-erythritol 4-phosphate cytidylyltransferase.